The chain runs to 122 residues: Small ribosomal subunit protein uS13 (122 aa).

Positions 95–122 (GLPVHGQRTHTNARTRKGPRRGAVGKKK) are disordered.

It belongs to the universal ribosomal protein uS13 family. As to quaternary structure, part of the 30S ribosomal subunit. Forms a loose heterodimer with protein S19. Forms two bridges to the 50S subunit in the 70S ribosome.

In terms of biological role, located at the top of the head of the 30S subunit, it contacts several helices of the 16S rRNA. In the 70S ribosome it contacts the 23S rRNA (bridge B1a) and protein L5 of the 50S subunit (bridge B1b), connecting the 2 subunits; these bridges are implicated in subunit movement. Contacts the tRNAs in the A and P-sites. This chain is Small ribosomal subunit protein uS13, found in Desulfovibrio desulfuricans (strain ATCC 27774 / DSM 6949 / MB).